Here is an 85-residue protein sequence, read N- to C-terminus: MSGQVPEYQFWLLAEISPVHSEKVINALRDYLVMGYNRMEACGRHGVSPGYFSGALKRFQRVSQTVYRLVPFYFPEAGHEVHRGE.

Its function is as follows. Regulates the transcription of genes involved in the biosynthesis of F1845 fimbrial adhesin. The chain is F1845 adhesin operon regulatory protein (daaA) from Escherichia coli.